Consider the following 209-residue polypeptide: Transcription factor 23 (209 aa).

Disordered stretches follow at residues 1–20 (MSQE…GHNK) and 54–85 (LSRA…ARER). The segment covering 72-85 (GRSEASPENAARER) has biased composition (basic and acidic residues). The 53-residue stretch at 75 to 127 (EASPENAARERTRVKTLRQAFLALQAALPAVPPDTKLSKLDVLVLATSYIAHL) folds into the bHLH domain.

As to quaternary structure, forms inactive heterodimeric complex with TCF3. In terms of tissue distribution, highly expressed in the uterus (predominantly in myometrium), ovary, and testis. Expression in the uterus is higher in the diestrus phase than in the estrus phase and reaches a maximum at 7.5 dpc. Expression declines towards the time of delivery and returns to the non-pregnant level 4 days after delivery. Low expression seen in lung, heart, intestine, and spleen.

The protein resides in the nucleus. In terms of biological role, inhibits E-box-mediated binding and transactivation of bHLH factors. Inhibitory effect is similar to that of ID proteins. Inhibits the formation of TCF3 and MYOD1 homodimers and heterodimers. Lacks DNA binding activity. May be involved in the regulation or modulation of smooth muscle contraction of the uterus during pregnancy and particularly around the time of delivery. Seems to play a role in the inhibition of myogenesis. In Mus musculus (Mouse), this protein is Transcription factor 23 (Tcf23).